The following is a 344-amino-acid chain: Holliday junction branch migration complex subunit RuvB (344 aa).

Residues 1-185 (MSTSRSDALK…FGIDFRYDYY (185 aa)) are large ATPase domain (RuvB-L). ATP is bound by residues L24, R25, G66, K69, T70, T71, 132 to 134 (EDY), R175, Y185, and R222. Residue T70 participates in Mg(2+) binding. The segment at 186 to 256 (TADLLQEITQ…IADRALNALD (71 aa)) is small ATPAse domain (RuvB-S). Residues 259 to 344 (EEGLDDMDAR…AADQDLFDQE (86 aa)) form a head domain (RuvB-H) region. Residues R314 and R319 each coordinate DNA.

This sequence belongs to the RuvB family. In terms of assembly, homohexamer. Forms an RuvA(8)-RuvB(12)-Holliday junction (HJ) complex. HJ DNA is sandwiched between 2 RuvA tetramers; dsDNA enters through RuvA and exits via RuvB. An RuvB hexamer assembles on each DNA strand where it exits the tetramer. Each RuvB hexamer is contacted by two RuvA subunits (via domain III) on 2 adjacent RuvB subunits; this complex drives branch migration. In the full resolvosome a probable DNA-RuvA(4)-RuvB(12)-RuvC(2) complex forms which resolves the HJ.

It is found in the cytoplasm. The enzyme catalyses ATP + H2O = ADP + phosphate + H(+). Its function is as follows. The RuvA-RuvB-RuvC complex processes Holliday junction (HJ) DNA during genetic recombination and DNA repair, while the RuvA-RuvB complex plays an important role in the rescue of blocked DNA replication forks via replication fork reversal (RFR). RuvA specifically binds to HJ cruciform DNA, conferring on it an open structure. The RuvB hexamer acts as an ATP-dependent pump, pulling dsDNA into and through the RuvAB complex. RuvB forms 2 homohexamers on either side of HJ DNA bound by 1 or 2 RuvA tetramers; 4 subunits per hexamer contact DNA at a time. Coordinated motions by a converter formed by DNA-disengaged RuvB subunits stimulates ATP hydrolysis and nucleotide exchange. Immobilization of the converter enables RuvB to convert the ATP-contained energy into a lever motion, pulling 2 nucleotides of DNA out of the RuvA tetramer per ATP hydrolyzed, thus driving DNA branch migration. The RuvB motors rotate together with the DNA substrate, which together with the progressing nucleotide cycle form the mechanistic basis for DNA recombination by continuous HJ branch migration. Branch migration allows RuvC to scan DNA until it finds its consensus sequence, where it cleaves and resolves cruciform DNA. In Salinibacter ruber (strain DSM 13855 / M31), this protein is Holliday junction branch migration complex subunit RuvB.